A 354-amino-acid polypeptide reads, in one-letter code: Small ribosomal subunit biogenesis GTPase RsgA 1 (354 aa).

A compositionally biased stretch (basic residues) spans 1-24 (MAKKKKLTKGQVRRVRSNQQKRLK). The segment at 1 to 28 (MAKKKKLTKGQVRRVRSNQQKRLKKQEE) is disordered. A CP-type G domain is found at 113–274 (YDGLKPVAAN…LIDSPGVREF (162 aa)). GTP is bound by residues 160-163 (NKVD) and 214-222 (GQSGVGKSS). The Zn(2+) site is built by cysteine 298, cysteine 303, histidine 305, and cysteine 311.

This sequence belongs to the TRAFAC class YlqF/YawG GTPase family. RsgA subfamily. Monomer. Associates with 30S ribosomal subunit, binds 16S rRNA. Requires Zn(2+) as cofactor.

It localises to the cytoplasm. One of several proteins that assist in the late maturation steps of the functional core of the 30S ribosomal subunit. Helps release RbfA from mature subunits. May play a role in the assembly of ribosomal proteins into the subunit. Circularly permuted GTPase that catalyzes slow GTP hydrolysis, GTPase activity is stimulated by the 30S ribosomal subunit. This is Small ribosomal subunit biogenesis GTPase RsgA 1 from Vibrio parahaemolyticus serotype O3:K6 (strain RIMD 2210633).